The chain runs to 443 residues: Leucine/methionine racemase (443 aa).

Pyridoxal 5'-phosphate contacts are provided by residues 110-111 and glutamine 247; that span reads GS. The residue at position 273 (lysine 273) is an N6-(pyridoxal phosphate)lysine. Pyridoxal 5'-phosphate is bound at residue threonine 302.

It belongs to the class-III pyridoxal-phosphate-dependent aminotransferase family. The cofactor is pyridoxal 5'-phosphate.

It carries out the reaction L-leucine = D-leucine. It catalyses the reaction L-methionine = D-methionine. Activity is strongly inhibited by several metal ions, including Co(2+), Zn(2+), Ni(2+), Cu(2+) and Fe(3+), and nonsubstrate amino acids such as L-arginine and L-lysine. Activity is completely abolished in the presence of hydroxylamine, an inhibitor of pyridoxal phosphate-dependent enzymes. In terms of biological role, amino acid racemase with moderate substrate specificity. Is primarily active toward leucine, which is the preferred substrate, and methionine. Also exhibits lower levels of activity toward phenylalanine, alanine and serine. This Thermococcus litoralis (strain ATCC 51850 / DSM 5473 / JCM 8560 / NS-C) protein is Leucine/methionine racemase.